Consider the following 351-residue polypeptide: Adenine deaminase (351 aa).

Positions 20, 22, and 200 each coordinate Zn(2+). The active-site Proton donor is the Glu-203. Asp-281 serves as a coordination point for Zn(2+). Asp-282 lines the substrate pocket.

This sequence belongs to the metallo-dependent hydrolases superfamily. Adenosine and AMP deaminases family. Adenine deaminase type 2 subfamily. It depends on Zn(2+) as a cofactor.

It carries out the reaction adenine + H2O + H(+) = hypoxanthine + NH4(+). In terms of biological role, catalyzes the hydrolytic deamination of adenine to hypoxanthine. Plays an important role in the purine salvage pathway and in nitrogen catabolism. This is Adenine deaminase from Cupriavidus taiwanensis (strain DSM 17343 / BCRC 17206 / CCUG 44338 / CIP 107171 / LMG 19424 / R1) (Ralstonia taiwanensis (strain LMG 19424)).